The sequence spans 450 residues: Paired box protein Pax-8 (450 aa).

The paired DNA-binding region spans 9–135; that stretch reads GHGGLNQLGG…SSINRIIRTK (127 aa). The tract at residues 12–68 is PAI subdomain; the sequence is GLNQLGGAFVNGRPLPEVVRQRIVDLAHQGVRPCDISRQLRVSHGCVSKILGRYYET. The interval 87–135 is RED subdomain; the sequence is KVVEKIGDYKRQNPTMFAWEIRDRLLAEGVCDNDTVPSVSSINRIIRTK. The span at 159 to 182 shows a compositional bias: polar residues; that stretch reads LIPSSAVTPPESPQSDSLGSTYSI. Residues 159–222 form a disordered region; that stretch reads LIPSSAVTPP…QSSSSGPRKH (64 aa). A Phosphoserine modification is found at S303.

Interacts with WWTR1. As to expression, expressed in the excretory system, thyroid gland and Wilms tumors.

The protein localises to the nucleus. Transcription factor for the thyroid-specific expression of the genes exclusively expressed in the thyroid cell type, maintaining the functional differentiation of such cells. This chain is Paired box protein Pax-8 (PAX8), found in Homo sapiens (Human).